Reading from the N-terminus, the 289-residue chain is Spore coat polysaccharide biosynthesis protein SpsD (289 aa).

The 153-residue stretch at 137-289 (FELGPPEPGD…YHIWPGKEAK (153 aa)) folds into the N-acetyltransferase domain.

It functions in the pathway spore coat biogenesis; spore coat polysaccharide biosynthesis. The chain is Spore coat polysaccharide biosynthesis protein SpsD (spsD) from Bacillus subtilis (strain 168).